Here is a 639-residue protein sequence, read N- to C-terminus: tRNA 5-methylaminomethyl-2-thiouridine biosynthesis bifunctional protein MnmC (639 aa).

Positions 1-228 are tRNA (mnm(5)s(2)U34)-methyltransferase; sequence MSEPIEWLED…KRDNLQATYA (228 aa). The FAD-dependent cmnm(5)s(2)U34 oxidoreductase stretch occupies residues 254 to 639; sequence VGAGLAGAAV…SERWLGYEPQ (386 aa).

It in the N-terminal section; belongs to the methyltransferase superfamily. tRNA (mnm(5)s(2)U34)-methyltransferase family. In the C-terminal section; belongs to the DAO family. It depends on FAD as a cofactor.

The protein localises to the cytoplasm. It carries out the reaction 5-aminomethyl-2-thiouridine(34) in tRNA + S-adenosyl-L-methionine = 5-methylaminomethyl-2-thiouridine(34) in tRNA + S-adenosyl-L-homocysteine + H(+). In terms of biological role, catalyzes the last two steps in the biosynthesis of 5-methylaminomethyl-2-thiouridine (mnm(5)s(2)U) at the wobble position (U34) in tRNA. Catalyzes the FAD-dependent demodification of cmnm(5)s(2)U34 to nm(5)s(2)U34, followed by the transfer of a methyl group from S-adenosyl-L-methionine to nm(5)s(2)U34, to form mnm(5)s(2)U34. The sequence is that of tRNA 5-methylaminomethyl-2-thiouridine biosynthesis bifunctional protein MnmC from Acidovorax sp. (strain JS42).